The chain runs to 81 residues: Small cysteine-rich protein 1 2 (81 aa).

A signal peptide spans 1-19 (MGVNFNICLLLLLVATISS). Residues 20–39 (QPLKATEKDDSTDENPFGIY) constitute a propeptide that is removed on maturation.

Belongs to the Cnidaria small cysteine-rich protein (SCRiP) family. alpha subfamily. In terms of processing, the basic myotoxic domain of rattlesnake crotamine toxins (with 6 Cys residues) has been detected in this protein. However, this protein contains 2 additional Cys at the C-terminal region. Hence, this protein may contain 4 disulfide bonds instead of the 3 suggested by the myotoxin domain.

It localises to the secreted. Its subcellular location is the nematocyst. Functionally, induces neurotoxic symptoms on zebrafish. Has also been claimed to be implied in calcification, but tests on homolog proteins suggest that proteins of this family have a neurotoxic function and not a calcification function. This chain is Small cysteine-rich protein 1 2, found in Montipora capitata (Rice coral).